Here is a 364-residue protein sequence, read N- to C-terminus: Alanine racemase (364 aa).

Lys34 serves as the catalytic Proton acceptor; specific for D-alanine. Lys34 is subject to N6-(pyridoxal phosphate)lysine. Arg129 lines the substrate pocket. The active-site Proton acceptor; specific for L-alanine is the Tyr259. Substrate is bound at residue Met307.

This sequence belongs to the alanine racemase family. Pyridoxal 5'-phosphate serves as cofactor.

It carries out the reaction L-alanine = D-alanine. The protein operates within amino-acid biosynthesis; D-alanine biosynthesis; D-alanine from L-alanine: step 1/1. Its function is as follows. Catalyzes the interconversion of L-alanine and D-alanine. May also act on other amino acids. This chain is Alanine racemase (alr), found in Coxiella burnetii (strain CbuG_Q212) (Coxiella burnetii (strain Q212)).